A 475-amino-acid chain; its full sequence is Ankyrin repeat, SAM and basic leucine zipper domain-containing protein 1 (475 aa).

Residues 1–24 form a disordered region; sequence MAAGPLRGLAVAGGGESSESEDDG. A phosphoserine mark is found at serine 17, serine 18, and serine 20. ANK repeat units lie at residues 45–74, 78–107, 110–144, 148–177, 181–210, and 214–243; these read ERQE…SVDT, YGWT…NASF, DKQT…DPNV, RLMT…EVNT, NGYT…NKMI, and DGKT…PLEG. An SAM domain is found at 272 to 334; sequence SYTAFGDLEI…KIMAALKELE (63 aa).

In terms of assembly, interacts with DDX4, PIWIL1, RANBP9 and TDRD1.

Its subcellular location is the cytoplasm. In terms of biological role, plays a central role during spermatogenesis by repressing transposable elements and preventing their mobilization, which is essential for the germline integrity. Acts via the piRNA metabolic process, which mediates the repression of transposable elements during meiosis by forming complexes composed of piRNAs and Piwi proteins and governs the methylation and subsequent repression of transposons. Its association with pi-bodies suggests a participation in the primary piRNAs metabolic process. Required prior to the pachytene stage to facilitate the production of multiple types of piRNAs, including those associated with repeats involved in the regulation of retrotransposons. May act by mediating protein-protein interactions during germ cell maturation. This chain is Ankyrin repeat, SAM and basic leucine zipper domain-containing protein 1 (ASZ1), found in Ovis aries (Sheep).